Reading from the N-terminus, the 123-residue chain is Hydrogenase maturation factor HypA (123 aa).

His-2 provides a ligand contact to Ni(2+). Zn(2+) is bound by residues Cys-73, Cys-76, Cys-90, and Cys-93.

The protein belongs to the HypA/HybF family.

Involved in the maturation of [NiFe] hydrogenases. Required for nickel insertion into the metal center of the hydrogenase. The chain is Hydrogenase maturation factor HypA from Roseiflexus sp. (strain RS-1).